Reading from the N-terminus, the 149-residue chain is Calmodulin-3 (149 aa).

Ala2 is modified (N-acetylalanine). EF-hand domains lie at 8–43 (DQIA…LGQN), 44–79 (PTEA…KMKD), 81–116 (DSEE…LGEK), and 117–149 (LTDE…MMAK). Residues Asp21, Asp23, Asp25, Cys27, Glu32, Asp57, Asp59, Asn61, Thr63, Glu68, Asp94, Asp96, Asn98, and Glu105 each coordinate Ca(2+). An N6,N6,N6-trimethyllysine modification is found at Lys116. Residues Asp130, Asp132, Asp134, Gln136, and Glu141 each coordinate Ca(2+).

Belongs to the calmodulin family.

Calmodulin mediates the control of a large number of enzymes, ion channels and other proteins by Ca(2+). Among the enzymes to be stimulated by the calmodulin-Ca(2+) complex are a number of protein kinases and phosphatases. The chain is Calmodulin-3 (CAM3) from Oryza sativa subsp. japonica (Rice).